Reading from the N-terminus, the 411-residue chain is Phosphoglycerate kinase (411 aa).

Substrate contacts are provided by residues Asp-19 to Asn-21, Arg-34, His-57 to Arg-60, Arg-114, and Arg-154. Residues Glu-332 and Gly-358–Ser-361 contribute to the ATP site.

Belongs to the phosphoglycerate kinase family. In terms of assembly, monomer.

The protein resides in the cytoplasm. The catalysed reaction is (2R)-3-phosphoglycerate + ATP = (2R)-3-phospho-glyceroyl phosphate + ADP. The protein operates within carbohydrate degradation; glycolysis; pyruvate from D-glyceraldehyde 3-phosphate: step 2/5. This is Phosphoglycerate kinase from Thermococcus kodakarensis (strain ATCC BAA-918 / JCM 12380 / KOD1) (Pyrococcus kodakaraensis (strain KOD1)).